Reading from the N-terminus, the 201-residue chain is Holliday junction branch migration complex subunit RuvA (201 aa).

Residues 1 to 63 (MYDYIKGTVT…EDNISLFGFQ (63 aa)) are domain I. The domain II stretch occupies residues 64 to 142 (TTEERYLFKK…DVVASEIVYV (79 aa)). The segment at 143–153 (APENDMVAGLS) is flexible linker. Residues 153-201 (SPQLEEAVLALEALGYSTRELKKVIPKLSKEEDLTSDAYIKLALQLMTK) form a domain III region.

It belongs to the RuvA family. As to quaternary structure, homotetramer. Forms an RuvA(8)-RuvB(12)-Holliday junction (HJ) complex. HJ DNA is sandwiched between 2 RuvA tetramers; dsDNA enters through RuvA and exits via RuvB. An RuvB hexamer assembles on each DNA strand where it exits the tetramer. Each RuvB hexamer is contacted by two RuvA subunits (via domain III) on 2 adjacent RuvB subunits; this complex drives branch migration. In the full resolvosome a probable DNA-RuvA(4)-RuvB(12)-RuvC(2) complex forms which resolves the HJ.

The protein localises to the cytoplasm. In terms of biological role, the RuvA-RuvB-RuvC complex processes Holliday junction (HJ) DNA during genetic recombination and DNA repair, while the RuvA-RuvB complex plays an important role in the rescue of blocked DNA replication forks via replication fork reversal (RFR). RuvA specifically binds to HJ cruciform DNA, conferring on it an open structure. The RuvB hexamer acts as an ATP-dependent pump, pulling dsDNA into and through the RuvAB complex. HJ branch migration allows RuvC to scan DNA until it finds its consensus sequence, where it cleaves and resolves the cruciform DNA. In Listeria monocytogenes serotype 4b (strain CLIP80459), this protein is Holliday junction branch migration complex subunit RuvA.